The chain runs to 60 residues: Large ribosomal subunit protein uL30 (60 aa).

This sequence belongs to the universal ribosomal protein uL30 family. Part of the 50S ribosomal subunit.

The sequence is that of Large ribosomal subunit protein uL30 from Shewanella sp. (strain MR-7).